Consider the following 869-residue polypeptide: Mismatch repair endonuclease PMS2 (869 aa).

ATP contacts are provided by asparagine 44, aspartate 69, glutamate 108, alanine 109, and leucine 110. The Nuclear localization signal motif lies at 585–588 (RRFK).

The protein belongs to the DNA mismatch repair MutL/HexB family.

The protein resides in the nucleus. The catalysed reaction is ATP + H2O = ADP + phosphate + H(+). Its function is as follows. Component of the post-replicative DNA mismatch repair system (MMR). Involved in B cell growth by positively regulating B cell proliferation and controlling replication efficiency. Controls cell cycle to prevent re-replication and defects in DNA damage-induced G2 checkpoint. Doesn't seem to counteract or control the immunoglobulin gene conversion (Ig GC) and to contribute to guanine/uracil mismatch repair. Possesses an ATPase activity, but in the absence of gross structural changes, ATP hydrolysis may not be necessary for proficient mismatch repair. The sequence is that of Mismatch repair endonuclease PMS2 from Gallus gallus (Chicken).